Consider the following 144-residue polypeptide: MATARRVARVAELIKREVSQILLSEIKDDRVGAGMVSIVDVEVSNDLQNARIFVSIYGDETAQHQAMEGLAAATPFVRREIGQRLSLRRVPTVVFLQDRSLERGSRVLALLNQLRPTFEAKAQTGVEEPLENTAEGEENPSGGE.

The interval 121-144 (KAQTGVEEPLENTAEGEENPSGGE) is disordered. Residues 128–138 (EPLENTAEGEE) show a composition bias toward acidic residues.

Belongs to the RbfA family. Monomer. Binds 30S ribosomal subunits, but not 50S ribosomal subunits or 70S ribosomes.

The protein localises to the cytoplasm. In terms of biological role, one of several proteins that assist in the late maturation steps of the functional core of the 30S ribosomal subunit. Associates with free 30S ribosomal subunits (but not with 30S subunits that are part of 70S ribosomes or polysomes). Required for efficient processing of 16S rRNA. May interact with the 5'-terminal helix region of 16S rRNA. The sequence is that of Ribosome-binding factor A from Synechococcus sp. (strain JA-2-3B'a(2-13)) (Cyanobacteria bacterium Yellowstone B-Prime).